The following is a 208-amino-acid chain: uncharacterized protein (208 aa).

This is an uncharacterized protein from Methanocaldococcus jannaschii (strain ATCC 43067 / DSM 2661 / JAL-1 / JCM 10045 / NBRC 100440) (Methanococcus jannaschii).